A 273-amino-acid chain; its full sequence is Cytochrome b-c1 complex subunit Rieske, mitochondrial (273 aa).

Residues 1–61 (MLRVAGRRLS…PFFVASRGFS (61 aa)) constitute a mitochondrion transit peptide. A disordered region spans residues 25-46 (PLAGAGVPDRDDDSARGRSQPR). Residues 62–110 (STETVVPRNQDAGLADLPATVAAVKNPNPKVVYDEYNHERYPPGDPSKR) lie on the Mitochondrial matrix side of the membrane. A helical transmembrane segment spans residues 111-133 (AFAYFVLSGGRFIYASLLRLLVL). Over 134–273 (KFVLSMSASK…FLEENKLLVG (140 aa)) the chain is Mitochondrial intermembrane. The Rieske domain maps to 176-271 (RRRTEDDIKL…YSFLEENKLL (96 aa)). [2Fe-2S] cluster-binding residues include C216, H218, C235, and H238. A disulfide bridge links C221 with C237.

The protein belongs to the Rieske iron-sulfur protein family. As to quaternary structure, component of the ubiquinol-cytochrome c oxidoreductase (cytochrome b-c1 complex, complex III, CIII), a multisubunit enzyme composed of 3 respiratory subunits cytochrome b, cytochrome c1 and Rieske protein, 2 core protein subunits, and several low-molecular weight protein subunits. The complex exists as an obligatory dimer and forms supercomplexes (SCs) in the inner mitochondrial membrane with cytochrome c oxidase (complex IV, CIV). The cofactor is [2Fe-2S] cluster.

The protein localises to the mitochondrion inner membrane. The catalysed reaction is a quinol + 2 Fe(III)-[cytochrome c](out) = a quinone + 2 Fe(II)-[cytochrome c](out) + 2 H(+)(out). Its function is as follows. Component of the ubiquinol-cytochrome c oxidoreductase, a multisubunit transmembrane complex that is part of the mitochondrial electron transport chain which drives oxidative phosphorylation. The respiratory chain contains 3 multisubunit complexes succinate dehydrogenase (complex II, CII), ubiquinol-cytochrome c oxidoreductase (cytochrome b-c1 complex, complex III, CIII) and cytochrome c oxidase (complex IV, CIV), that cooperate to transfer electrons derived from NADH and succinate to molecular oxygen, creating an electrochemical gradient over the inner membrane that drives transmembrane transport and the ATP synthase. The cytochrome b-c1 complex catalyzes electron transfer from ubiquinol to cytochrome c, linking this redox reaction to translocation of protons across the mitochondrial inner membrane, with protons being carried across the membrane as hydrogens on the quinol. In the process called Q cycle, 2 protons are consumed from the matrix, 4 protons are released into the intermembrane space and 2 electrons are passed to cytochrome c. The Rieske protein is a catalytic core subunit containing a [2Fe-2S] iron-sulfur cluster. It cycles between 2 conformational states during catalysis to transfer electrons from the quinol bound in the Q(0) site in cytochrome b to cytochrome c1. The polypeptide is Cytochrome b-c1 complex subunit Rieske, mitochondrial (Zea mays (Maize)).